Reading from the N-terminus, the 374-residue chain is Serine/threonine-protein kinase-transforming protein mos (374 aa).

Positions 94–370 constitute a Protein kinase domain; sequence VCLMHRLGSG…LLQRDLKAFR (277 aa). ATP is bound by residues 100-108 and Lys121; that span reads LGSGGFGSV. The active-site Proton acceptor is the Asp229.

The protein belongs to the protein kinase superfamily. Ser/Thr protein kinase family.

The enzyme catalyses L-seryl-[protein] + ATP = O-phospho-L-seryl-[protein] + ADP + H(+). The catalysed reaction is L-threonyl-[protein] + ATP = O-phospho-L-threonyl-[protein] + ADP + H(+). This chain is Serine/threonine-protein kinase-transforming protein mos (V-MOS), found in Mus musculus (Mouse).